Consider the following 980-residue polypeptide: Valine--tRNA ligase (980 aa).

The short motif at 43–53 is the 'HIGH' region element; it reads PNVTGTLHMGH. The 'KMSKS' region signature appears at 586-590; the sequence is KMSKS. K589 contributes to the ATP binding site. Positions 914–978 form a coiled coil; sequence LVDMDAERTR…QLTGLREQRA (65 aa).

Belongs to the class-I aminoacyl-tRNA synthetase family. ValS type 1 subfamily. As to quaternary structure, monomer.

The protein localises to the cytoplasm. It carries out the reaction tRNA(Val) + L-valine + ATP = L-valyl-tRNA(Val) + AMP + diphosphate. Its function is as follows. Catalyzes the attachment of valine to tRNA(Val). As ValRS can inadvertently accommodate and process structurally similar amino acids such as threonine, to avoid such errors, it has a 'posttransfer' editing activity that hydrolyzes mischarged Thr-tRNA(Val) in a tRNA-dependent manner. In Xanthomonas euvesicatoria pv. vesicatoria (strain 85-10) (Xanthomonas campestris pv. vesicatoria), this protein is Valine--tRNA ligase.